Reading from the N-terminus, the 62-residue chain is Large ribosomal subunit protein bL33 (62 aa).

It belongs to the bacterial ribosomal protein bL33 family.

The chain is Large ribosomal subunit protein bL33 from Porphyromonas gingivalis (strain ATCC 33277 / DSM 20709 / CIP 103683 / JCM 12257 / NCTC 11834 / 2561).